An 86-amino-acid polypeptide reads, in one-letter code: Large ribosomal subunit protein bL31B (86 aa).

The protein belongs to the bacterial ribosomal protein bL31 family. Type B subfamily. As to quaternary structure, part of the 50S ribosomal subunit.

The chain is Large ribosomal subunit protein bL31B from Cupriavidus pinatubonensis (strain JMP 134 / LMG 1197) (Cupriavidus necator (strain JMP 134)).